A 426-amino-acid chain; its full sequence is 6-Hydroxy-7-prenyldeoxybrevianamide E synthase notC' (426 aa).

Glu94 contributes to the substrate binding site. Arg105, Lys191, and Tyr193 together coordinate dimethylallyl diphosphate. Tyr195 serves as a coordination point for substrate. Lys267, Tyr269, Gln352, Tyr354, Tyr418, and Tyr422 together coordinate dimethylallyl diphosphate.

The protein belongs to the tryptophan dimethylallyltransferase family.

It carries out the reaction 6-hydroxydeoxybrevianamide E + dimethylallyl diphosphate = notoamide S + diphosphate. It functions in the pathway alkaloid biosynthesis. Functionally, prenyltransferase; part of the gene cluster that mediates the biosynthesis of notoamide, a fungal indole alkaloid that belongs to a family of natural products containing a characteristic bicyclo[2.2.2]diazaoctane core. The first step of notoamide biosynthesis involves coupling of L-proline and L-tryptophan by the bimodular NRPS notE', to produce cyclo-L-tryptophan-L-proline called brevianamide F. The reverse prenyltransferase notF' then acts as a deoxybrevianamide E synthase and converts brevianamide F to deoxybrevianamide E via reverse prenylation at C-2 of the indole ring leading to the bicyclo[2.2.2]diazaoctane core. Deoxybrevianamide E is further hydroxylated at C-6 of the indole ring, likely catalyzed by the cytochrome P450 monooxygenase notG', to yield 6-hydroxy-deoxybrevianamide E. 6-hydroxy-deoxybrevianamide E is a specific substrate of the prenyltransferase notC' for normal prenylation at C-7 to produce 6-hydroxy-7-prenyl-deoxybrevianamide, also called notoamide S. As the proposed pivotal branching point in notoamide biosynthesis, notoamide S can be diverted to notoamide E through an oxidative pyran ring closure putatively catalyzed by either notH' cytochrome P450 monooxygenase or the notD' FAD-linked oxidoreductase. This step would be followed by an indole 2,3-epoxidation-initiated pinacol-like rearrangement catalyzed by the notB' FAD-dependent monooxygenase leading to the formation of notoamide C and notoamide D. On the other hand notoamide S is converted to notoamide T by notH' (or notD'), a bifunctional oxidase that also functions as the intramolecular Diels-Alderase responsible for generation of (-)-notoamide T. To generate antipodal (+)-notoaminide T, notH (or notD) in Aspergillus strain MF297-2 is expected to catalyze a Diels-Alder reaction leading to the opposite stereochemistry. The remaining oxidoreductase notD' (or notH') likely catalyzes the oxidative pyran ring formation to yield (-)-stephacidin A. The FAD-dependent monooxygenase notI' is highly similar to notB' and is predicted to catalyze a similar conversion from (-)-stephacidin A to (+)-notoamide B via the 2,3-epoxidation of (-)-stephacidin A followed by a pinacol-type rearrangement. Finally, it remains unclear which enzyme could be responsible for the final hydroxylation steps leading to notoamide A and sclerotiamide. In Aspergillus versicolor, this protein is 6-Hydroxy-7-prenyldeoxybrevianamide E synthase notC'.